The primary structure comprises 2684 residues: Probable polyketide synthase 27 (2684 aa).

The Ketosynthase family 3 (KS3) domain occupies 11–442; the sequence is CGDVAIIGIG…GSNVCLILSE (432 aa). Active-site for beta-ketoacyl synthase activity residues include C183, H322, and H365. Residues 650–683 are acyl/malonyl transferases; that stretch reads GVSADIIVGHSLGEMSSSYSSGMIDFETLCYLIY. Residue S660 is the For acyl/malonyl transferase activity of the active site. The interval 958-1087 is N-terminal hotdog fold; that stretch reads HEKITSEGPP…GNFSLFKHNS (130 aa). Positions 958-1276 constitute a PKS/mFAS DH domain; sequence HEKITSEGPP…CTSVSLVNPR (319 aa). The active-site Proton acceptor; for dehydratase activity is the H999. Residues 1104–1276 are C-terminal hotdog fold; that stretch reads NFTTISKQEF…CTSVSLVNPR (173 aa). D1173 serves as the catalytic Proton donor; for dehydratase activity. A disordered region spans residues 1202-1221; it reads IPSSSSSSKDDNDCDSNNNN. The 78-residue stretch at 2585-2662 folds into the Carrier domain; that stretch reads SDNEFIHSTI…QSIDIIKFGY (78 aa). Residue S2622 is modified to O-(pantetheine 4'-phosphoryl)serine.

Pantetheine 4'-phosphate is required as a cofactor.

Its function is as follows. Probable polyketide synthase. This chain is Probable polyketide synthase 27 (pks27), found in Dictyostelium discoideum (Social amoeba).